A 338-amino-acid chain; its full sequence is Dihydroorotate dehydrogenase (quinone) (338 aa).

FMN contacts are provided by residues 59–63 (AGLDK) and Thr-83. Lys-63 serves as a coordination point for substrate. Position 108-112 (108-112 (NRMGF)) interacts with substrate. FMN-binding residues include Asn-136 and Asn-169. Asn-169 lines the substrate pocket. Ser-172 functions as the Nucleophile in the catalytic mechanism. Residue Asn-174 participates in substrate binding. FMN is bound by residues Lys-214 and Thr-242. 243–244 (NT) is a binding site for substrate. FMN is bound by residues Gly-265, Gly-294, and 315–316 (YS).

Belongs to the dihydroorotate dehydrogenase family. Type 2 subfamily. Monomer. FMN serves as cofactor.

Its subcellular location is the cell membrane. The catalysed reaction is (S)-dihydroorotate + a quinone = orotate + a quinol. Its pathway is pyrimidine metabolism; UMP biosynthesis via de novo pathway; orotate from (S)-dihydroorotate (quinone route): step 1/1. Catalyzes the conversion of dihydroorotate to orotate with quinone as electron acceptor. This Azoarcus sp. (strain BH72) protein is Dihydroorotate dehydrogenase (quinone).